An 81-amino-acid polypeptide reads, in one-letter code: UPF0180 protein RBAM_013970 (81 aa).

Belongs to the UPF0180 family.

In Bacillus velezensis (strain DSM 23117 / BGSC 10A6 / LMG 26770 / FZB42) (Bacillus amyloliquefaciens subsp. plantarum), this protein is UPF0180 protein RBAM_013970.